A 315-amino-acid chain; its full sequence is Cobalamin biosynthesis protein CobD (315 aa).

Helical transmembrane passes span 54 to 74 (GLLFVLTVGMTGVVSWFILFL), 78 to 98 (IAYWLYVAVFVYLGYTTLAMT), 152 to 172 (ADGVIAPLFYLFIGGPVLALM), 203 to 223 (IANFIPARLAWFFLVIASFIL), and 295 to 315 (LLYTASTIAFIIFASIYLLLF).

Belongs to the CobD/CbiB family.

Its subcellular location is the cell membrane. It participates in cofactor biosynthesis; adenosylcobalamin biosynthesis. Its function is as follows. Converts cobyric acid to cobinamide by the addition of aminopropanol on the F carboxylic group. The polypeptide is Cobalamin biosynthesis protein CobD (Listeria monocytogenes serotype 4b (strain F2365)).